The following is an 809-amino-acid chain: Carbon monoxide dehydrogenase large chain (809 aa).

Cu(+) is bound at residue C388. E763 contributes to the Mo-molybdopterin cytosine dinucleotide binding site.

Dimer of heterotrimers. Each heterotrimer consists of a large, a medium and a small subunit. Cu(+) serves as cofactor. It depends on Mo-molybdopterin cytosine dinucleotide as a cofactor.

It catalyses the reaction CO + a quinone + H2O = a quinol + CO2. Functionally, catalyzes the oxidation of carbon monoxide to carbon dioxide. This is Carbon monoxide dehydrogenase large chain (coxL) from Afipia carboxidovorans (strain ATCC 49405 / DSM 1227 / KCTC 32145 / OM5) (Oligotropha carboxidovorans).